A 751-amino-acid chain; its full sequence is MTISSPEREAKKVKIAVDRNPVETSFEKWAKPGHFSRTLSKGPNTTTWIWNLHADAHDFDSHTSDLEEISRKVFSAHFGQLGVIFIWLSGMYFHGARFSNYEAWLSDPVHIKPSAQVVWPVVGQEILNGDVGGGFQGIQITSGFFQLWRASGITSELQLYTTAIGGLVMAAAMFFAGWFHYHKAAPKLEWFQNVESMLNHHLAGLLGLGSLSWAGHQIHVSLPVNKLLDAGVDPKEIPLPHEFLLNRQIMQDLYPSFAKGLAPFFTLQWGEYSDFLTFNGGLNPVTGGLWLSDTAHHHLAIAVLFLVAGHMYRTNWGIGHSMREILDAHKGPFTGEGHVGLYEILTTSWHAQLAINLALFGSLSIIVAHHMYSMPPYPYLATDYGTQLSLFTHHNWIGGFCIVGAGAHAAIFMVRDYDPTNNYNNLLDRVIRHRDAIISHLNWVCIFLGFHSFGLYIHNDTMSALGRPQDMFSDTAIQLQPVFAQWIQKTHFLAPQLTAPTALSATSATWGGDVVAVGGKVAMMPISLGTSDFLVHHIHAFTIHVTVLILLKGVLFARSSRLIPDKANLGFRFPCDGPGRGGTCQVSAWDHVFLGLFWMYNSLSIAIFHFSWKMQSDVWGTVTANGVSHITGGNFAQSANTINGWLRDFLWAQSSQVIQSYGSALSAYGLMFLGAHFVWAFSLMFLFSGRGYWQELIESIIWAHSKLKVAPSIQPRALSITQGRAVGVAHYLLGGIATTWSFFLARIIAVG.

8 helical membrane-spanning segments follow: residues 73–96 (VFSA…FHGA), 159–182 (LYTT…FHYH), 198–222 (LNHH…HVSL), 294–312 (TAHH…GHMY), 349–372 (WHAQ…HHMY), 388–414 (LSLF…IFMV), 436–458 (AIIS…LYIH), and 533–551 (FLVH…LILL). 2 residues coordinate [4Fe-4S] cluster: Cys-575 and Cys-584. 2 consecutive transmembrane segments (helical) span residues 591 to 612 (HVFL…HFSW) and 665 to 687 (LSAY…MFLF). His-676 serves as a coordination point for chlorophyll a'. Chlorophyll a contacts are provided by Met-684 and Tyr-692. Trp-693 lines the phylloquinone pocket. The helical transmembrane segment at 725–745 (AVGVAHYLLGGIATTWSFFLA) threads the bilayer.

Belongs to the PsaA/PsaB family. As to quaternary structure, the PsaA/B heterodimer binds the P700 chlorophyll special pair and subsequent electron acceptors. PSI consists of a core antenna complex that captures photons, and an electron transfer chain that converts photonic excitation into a charge separation. The eukaryotic PSI reaction center is composed of at least 11 subunits. It depends on P700 is a chlorophyll a/chlorophyll a' dimer, A0 is one or more chlorophyll a, A1 is one or both phylloquinones and FX is a shared 4Fe-4S iron-sulfur center. as a cofactor.

It localises to the plastid. The protein resides in the chloroplast thylakoid membrane. It catalyses the reaction reduced [plastocyanin] + hnu + oxidized [2Fe-2S]-[ferredoxin] = oxidized [plastocyanin] + reduced [2Fe-2S]-[ferredoxin]. PsaA and PsaB bind P700, the primary electron donor of photosystem I (PSI), as well as the electron acceptors A0, A1 and FX. PSI is a plastocyanin/cytochrome c6-ferredoxin oxidoreductase, converting photonic excitation into a charge separation, which transfers an electron from the donor P700 chlorophyll pair to the spectroscopically characterized acceptors A0, A1, FX, FA and FB in turn. Oxidized P700 is reduced on the lumenal side of the thylakoid membrane by plastocyanin or cytochrome c6. In Tetradesmus obliquus (Green alga), this protein is Photosystem I P700 chlorophyll a apoprotein A1.